The chain runs to 329 residues: Ketol-acid reductoisomerase (NADP(+)) (329 aa).

The region spanning 1-181 is the KARI N-terminal Rossmann domain; it reads MKVYYEQDAN…GGTRSGVIET (181 aa). NADP(+) contacts are provided by residues 24–27, Arg-47, and 82–85; these read YGSQ and DQYQ. His-107 is a catalytic residue. An NADP(+)-binding site is contributed by Gly-133. Residues 182-327 enclose the KARI C-terminal knotted domain; sequence TFREETETDL…ARLRSMMPWL (146 aa). Positions 190, 194, 226, and 230 each coordinate Mg(2+). Substrate is bound at residue Ser-251.

Belongs to the ketol-acid reductoisomerase family. Mg(2+) serves as cofactor.

The catalysed reaction is (2R)-2,3-dihydroxy-3-methylbutanoate + NADP(+) = (2S)-2-acetolactate + NADPH + H(+). It catalyses the reaction (2R,3R)-2,3-dihydroxy-3-methylpentanoate + NADP(+) = (S)-2-ethyl-2-hydroxy-3-oxobutanoate + NADPH + H(+). Its pathway is amino-acid biosynthesis; L-isoleucine biosynthesis; L-isoleucine from 2-oxobutanoate: step 2/4. It functions in the pathway amino-acid biosynthesis; L-valine biosynthesis; L-valine from pyruvate: step 2/4. Its function is as follows. Involved in the biosynthesis of branched-chain amino acids (BCAA). Catalyzes an alkyl-migration followed by a ketol-acid reduction of (S)-2-acetolactate (S2AL) to yield (R)-2,3-dihydroxy-isovalerate. In the isomerase reaction, S2AL is rearranged via a Mg-dependent methyl migration to produce 3-hydroxy-3-methyl-2-ketobutyrate (HMKB). In the reductase reaction, this 2-ketoacid undergoes a metal-dependent reduction by NADPH to yield (R)-2,3-dihydroxy-isovalerate. This chain is Ketol-acid reductoisomerase (NADP(+)), found in Oleidesulfovibrio alaskensis (strain ATCC BAA-1058 / DSM 17464 / G20) (Desulfovibrio alaskensis).